Consider the following 49-residue polypeptide: Defensin Tk-AMP-D1 (49 aa).

4 cysteine pairs are disulfide-bonded: C3–C49, C14–C34, C20–C43, and C24–C45.

Functionally, has weak antifungal activity against F.graminearum and F.verticillioides below 30 ug/ml, but not against A.consortiale B.cinerea, H.sativum, F.culmorum, C.graminicola and D.maydis. The chain is Defensin Tk-AMP-D1 from Triticum kiharae (Wheat).